Consider the following 78-residue polypeptide: UPF0335 protein RPR_04100 (78 aa).

It belongs to the UPF0335 family.

The protein is UPF0335 protein RPR_04100 of Rickettsia peacockii (strain Rustic).